The primary structure comprises 257 residues: Hydroxyacylglutathione hydrolase (257 aa).

Zn(2+) is bound by residues His-54, His-56, Asp-58, His-59, His-113, Asp-137, and His-175.

This sequence belongs to the metallo-beta-lactamase superfamily. Glyoxalase II family. In terms of assembly, monomer. Zn(2+) is required as a cofactor.

It carries out the reaction an S-(2-hydroxyacyl)glutathione + H2O = a 2-hydroxy carboxylate + glutathione + H(+). Its pathway is secondary metabolite metabolism; methylglyoxal degradation; (R)-lactate from methylglyoxal: step 2/2. In terms of biological role, thiolesterase that catalyzes the hydrolysis of S-D-lactoyl-glutathione to form glutathione and D-lactic acid. The sequence is that of Hydroxyacylglutathione hydrolase from Synechocystis sp. (strain ATCC 27184 / PCC 6803 / Kazusa).